We begin with the raw amino-acid sequence, 81 residues long: Sulfur carrier protein TusA (81 aa).

Cysteine 19 (cysteine persulfide intermediate) is an active-site residue.

This sequence belongs to the sulfur carrier protein TusA family.

Its subcellular location is the cytoplasm. In terms of biological role, sulfur carrier protein which probably makes part of a sulfur-relay system. This is Sulfur carrier protein TusA from Shewanella denitrificans (strain OS217 / ATCC BAA-1090 / DSM 15013).